The sequence spans 284 residues: NAD kinase (284 aa).

The active-site Proton acceptor is D70. NAD(+)-binding positions include 70 to 71, 139 to 140, K167, D169, L177, 180 to 185, and Q236; these read DG, NE, and TAYNLS.

This sequence belongs to the NAD kinase family. Requires a divalent metal cation as cofactor.

It is found in the cytoplasm. The catalysed reaction is NAD(+) + ATP = ADP + NADP(+) + H(+). Functionally, involved in the regulation of the intracellular balance of NAD and NADP, and is a key enzyme in the biosynthesis of NADP. Catalyzes specifically the phosphorylation on 2'-hydroxyl of the adenosine moiety of NAD to yield NADP. In Helicobacter pylori (strain P12), this protein is NAD kinase.